Here is a 494-residue protein sequence, read N- to C-terminus: Glutamyl-tRNA(Gln) amidotransferase subunit A, mitochondrial (494 aa).

Active-site charge relay system residues include Lys-79 and Ser-160. Catalysis depends on Ser-184, which acts as the Acyl-ester intermediate.

This sequence belongs to the amidase family. GatA subfamily. Subunit of the heterotrimeric GatCAB amidotransferase (AdT) complex, composed of A, B and C subunits.

It is found in the mitochondrion. It catalyses the reaction L-glutamyl-tRNA(Gln) + L-glutamine + ATP + H2O = L-glutaminyl-tRNA(Gln) + L-glutamate + ADP + phosphate + H(+). Functionally, allows the formation of correctly charged Gln-tRNA(Gln) through the transamidation of misacylated Glu-tRNA(Gln) in the mitochondria. The reaction takes place in the presence of glutamine and ATP through an activated gamma-phospho-Glu-tRNA(Gln). This chain is Glutamyl-tRNA(Gln) amidotransferase subunit A, mitochondrial, found in Aedes aegypti (Yellowfever mosquito).